Here is a 320-residue protein sequence, read N- to C-terminus: Cytochrome f (320 aa).

The first 35 residues, 1–35 (MENRNTFSWVKEQMTRSISVSIMIYVITRTSISNA), serve as a signal peptide directing secretion. Heme contacts are provided by Y36, C56, C59, and H60. A helical transmembrane segment spans residues 286 to 306 (VQGLLFFFASVILAQVFLVLK).

It belongs to the cytochrome f family. The 4 large subunits of the cytochrome b6-f complex are cytochrome b6, subunit IV (17 kDa polypeptide, petD), cytochrome f and the Rieske protein, while the 4 small subunits are PetG, PetL, PetM and PetN. The complex functions as a dimer. Heme serves as cofactor.

The protein resides in the plastid. It localises to the chloroplast thylakoid membrane. Functionally, component of the cytochrome b6-f complex, which mediates electron transfer between photosystem II (PSII) and photosystem I (PSI), cyclic electron flow around PSI, and state transitions. This Oryza nivara (Indian wild rice) protein is Cytochrome f.